Here is a 121-residue protein sequence, read N- to C-terminus: Protein SNORC (121 aa).

The N-terminal stretch at 1-24 (MASCLALRMALLLVSGVLAPAVLT) is a signal peptide. Topologically, residues 25–92 (DDVPQEPVPT…QGGGSLGPGA (68 aa)) are extracellular. Positions 28–84 (PQEPVPTLWNEPAELPSGEGPVESTSPGREPVDTGPPAPTVAPGPEDSTAQERLDQG) are disordered. Residues 93 to 113 (IAAIVIAALLATCVVLALVVV) form a helical membrane-spanning segment. Residues 114–121 (ALRKFSAS) lie on the Cytoplasmic side of the membrane.

As to quaternary structure, interacts (via the extracellular domain) with FGF2. Expressed in cartilage.

It is found in the membrane. It localises to the cytoplasm. The protein resides in the secreted. The protein localises to the extracellular space. Its subcellular location is the extracellular matrix. Functionally, plays a role in the regulation of chondrocyte maturation and postnatal endochondral ossification. May inhibit cell growth stimulation induced by FGF2. This chain is Protein SNORC, found in Homo sapiens (Human).